Consider the following 73-residue polypeptide: UPF0346 protein BLi02292/BL01432 (73 aa).

The protein belongs to the UPF0346 family.

In Bacillus licheniformis (strain ATCC 14580 / DSM 13 / JCM 2505 / CCUG 7422 / NBRC 12200 / NCIMB 9375 / NCTC 10341 / NRRL NRS-1264 / Gibson 46), this protein is UPF0346 protein BLi02292/BL01432.